The chain runs to 477 residues: Glycogen synthase (477 aa).

Lys-15 contacts ADP-alpha-D-glucose.

It belongs to the glycosyltransferase 1 family. Bacterial/plant glycogen synthase subfamily.

The catalysed reaction is [(1-&gt;4)-alpha-D-glucosyl](n) + ADP-alpha-D-glucose = [(1-&gt;4)-alpha-D-glucosyl](n+1) + ADP + H(+). It functions in the pathway glycan biosynthesis; glycogen biosynthesis. Functionally, synthesizes alpha-1,4-glucan chains using ADP-glucose. The chain is Glycogen synthase from Caldicellulosiruptor saccharolyticus (strain ATCC 43494 / DSM 8903 / Tp8T 6331).